Here is a 137-residue protein sequence, read N- to C-terminus: Probable calcium-binding protein CML33 (137 aa).

EF-hand domains are found at residues 1 to 36 (MNNMSLSDIFERFDTSKDGKISWEEFRDAIHALSPS), 37 to 72 (IPSEKLVEMFIQLDTNGDGQVDAAKFASCMDQTAQS), 76 to 111 (DVEKELKDAFKLYDINCDGKISANELHVVMTRLGEK), and 112 to 137 (CTVESCVGMVQAIDVDGDGYIRFVGV). Residues Asp-14, Ser-16, Asp-18, Lys-20, and Glu-25 each contribute to the Ca(2+) site. Ca(2+)-binding residues include Asp-89, Asn-91, Asp-93, Lys-95, and Glu-100.

Functionally, potential calcium sensor. This is Probable calcium-binding protein CML33 (CML33) from Arabidopsis thaliana (Mouse-ear cress).